Reading from the N-terminus, the 364-residue chain is 3-isopropylmalate dehydrogenase (364 aa).

79–92 (GPKWNNINETSRPE) is an NAD(+) binding site. Residues arginine 100, arginine 110, arginine 139, and aspartate 228 each contribute to the substrate site. Residues aspartate 228, aspartate 252, and aspartate 256 each coordinate Mg(2+). 286–298 (GSAPDIAGKNIAN) is an NAD(+) binding site.

The protein belongs to the isocitrate and isopropylmalate dehydrogenases family. LeuB type 1 subfamily. In terms of assembly, homodimer. The cofactor is Mg(2+). Requires Mn(2+) as cofactor.

It localises to the cytoplasm. It carries out the reaction (2R,3S)-3-isopropylmalate + NAD(+) = 4-methyl-2-oxopentanoate + CO2 + NADH. It participates in amino-acid biosynthesis; L-leucine biosynthesis; L-leucine from 3-methyl-2-oxobutanoate: step 3/4. In terms of biological role, catalyzes the oxidation of 3-carboxy-2-hydroxy-4-methylpentanoate (3-isopropylmalate) to 3-carboxy-4-methyl-2-oxopentanoate. The product decarboxylates to 4-methyl-2 oxopentanoate. This is 3-isopropylmalate dehydrogenase from Blochmanniella floridana.